Consider the following 415-residue polypeptide: N-succinylarginine dihydrolase (415 aa).

Substrate is bound by residues 18–27, Asn100, and 127–128; these read AGLSRGNIAS and HR. Glu161 is an active-site residue. Residue Arg193 participates in substrate binding. The active site involves His229. Substrate is bound by residues Asp231 and Asn340. Cys346 (nucleophile) is an active-site residue.

This sequence belongs to the succinylarginine dihydrolase family. In terms of assembly, homodimer.

It catalyses the reaction N(2)-succinyl-L-arginine + 2 H2O + 2 H(+) = N(2)-succinyl-L-ornithine + 2 NH4(+) + CO2. The protein operates within amino-acid degradation; L-arginine degradation via AST pathway; L-glutamate and succinate from L-arginine: step 2/5. Catalyzes the hydrolysis of N(2)-succinylarginine into N(2)-succinylornithine, ammonia and CO(2). The polypeptide is N-succinylarginine dihydrolase (Sphingopyxis alaskensis (strain DSM 13593 / LMG 18877 / RB2256) (Sphingomonas alaskensis)).